The primary structure comprises 195 residues: Interferon tau-8 (195 aa).

An N-terminal signal peptide occupies residues 1–23 (MAFVLSLLMALVLVSYGPGGSLG). 2 cysteine pairs are disulfide-bonded: Cys24-Cys122 and Cys52-Cys162.

This sequence belongs to the alpha/beta interferon family. IFN-alphaII subfamily. Constitutively and exclusively expressed in the mononuclear cells of the extraembryonic trophectoderm.

The protein resides in the secreted. Functionally, paracrine hormone primarily responsible for maternal recognition of pregnancy. Interacts with endometrial receptors, probably type I interferon receptors, and blocks estrogen receptor expression, preventing the estrogen-induced increase in oxytocin receptor expression in the endometrium. This results in the suppression of the pulsatile endometrial release of the luteolytic hormone prostaglandin F2-alpha, hindering the regression of the corpus luteum (luteolysis) and therefore a return to ovarian cyclicity. This, and a possible direct effect of IFN-tau on prostaglandin synthesis, leads in turn to continued ovarian progesterone secretion, which stimulates the secretion by the endometrium of the nutrients required for the growth of the conceptus. In summary, displays particularly high antiviral and antiproliferative potency concurrently with particular weak cytotoxicity, high antiluteolytic activity and immunomodulatory properties. In contrast with other IFNs, IFN-tau is not virally inducible. The sequence is that of Interferon tau-8 (IFNT8) from Ovis aries (Sheep).